The chain runs to 251 residues: Imidazole glycerol phosphate synthase subunit HisF (251 aa).

Residues D11 and D130 contribute to the active site.

The protein belongs to the HisA/HisF family. Heterodimer of HisH and HisF.

The protein resides in the cytoplasm. It catalyses the reaction 5-[(5-phospho-1-deoxy-D-ribulos-1-ylimino)methylamino]-1-(5-phospho-beta-D-ribosyl)imidazole-4-carboxamide + L-glutamine = D-erythro-1-(imidazol-4-yl)glycerol 3-phosphate + 5-amino-1-(5-phospho-beta-D-ribosyl)imidazole-4-carboxamide + L-glutamate + H(+). It participates in amino-acid biosynthesis; L-histidine biosynthesis; L-histidine from 5-phospho-alpha-D-ribose 1-diphosphate: step 5/9. Its function is as follows. IGPS catalyzes the conversion of PRFAR and glutamine to IGP, AICAR and glutamate. The HisF subunit catalyzes the cyclization activity that produces IGP and AICAR from PRFAR using the ammonia provided by the HisH subunit. The polypeptide is Imidazole glycerol phosphate synthase subunit HisF (Parabacteroides distasonis (strain ATCC 8503 / DSM 20701 / CIP 104284 / JCM 5825 / NCTC 11152)).